A 119-amino-acid polypeptide reads, in one-letter code: uncharacterized protein (119 aa).

2 helical membrane passes run leucine 61 to valine 80 and valine 87 to isoleucine 103.

It is found in the membrane. This is an uncharacterized protein from Saccharomyces cerevisiae (strain ATCC 204508 / S288c) (Baker's yeast).